The chain runs to 719 residues: B3 domain-containing protein Os03g0120900 (719 aa).

A DNA-binding region (TF-B3) is located at residues histidine 7–asparagine 110. 2 disordered regions span residues arginine 328 to glutamine 381 and glutamate 412 to valine 443. Residues aspartate 351–proline 366 show a composition bias toward basic and acidic residues. The span at histidine 416–asparagine 430 shows a compositional bias: polar residues.

The protein resides in the nucleus. The chain is B3 domain-containing protein Os03g0120900 from Oryza sativa subsp. japonica (Rice).